A 363-amino-acid polypeptide reads, in one-letter code: Putative replication factor C small subunit L510 (363 aa).

47 to 54 (GPPGTGKT) is a binding site for ATP.

It belongs to the activator 1 small subunits family. RfcS subfamily.

Its function is as follows. Part of the RFC clamp loader complex which loads the PCNA sliding clamp onto DNA. This chain is Putative replication factor C small subunit L510, found in Acanthamoeba polyphaga mimivirus (APMV).